Reading from the N-terminus, the 68-residue chain is Protein SlyX homolog (68 aa).

This sequence belongs to the SlyX family.

This Pseudomonas syringae pv. tomato (strain ATCC BAA-871 / DC3000) protein is Protein SlyX homolog.